We begin with the raw amino-acid sequence, 296 residues long: MSVPKIVLFYVFTPLADPEAVKLWQLNLAQRSGVKGRIIVSEQGINATVGGDIHDVKAYVRGLKEYAPFQHADIKWSDGAGDDFPRLSVKVRPELVTFDAPDLIRVTEHGVEGGGTHLTPHEVHELVERRGEDVVFFDGRNQLEAEIGRFRGAVVPRTETTRDFLRELDSGAYDHLKDKALVTYCTGGIRCEVLSGLLRNRGFRDVYQLDGGIVRYGEAYGDRGLWDGSLYVFDERRHMEFSLSARSLGRCVQCGEATPRYVNCANQQCRRLFLCCETCTGAGARTRCADCVPVAA.

Positions 130–225 constitute a Rhodanese domain; that stretch reads RGEDVVFFDG…YGEAYGDRGL (96 aa). Cys185 serves as the catalytic Cysteine persulfide intermediate.

This sequence belongs to the TrhO family.

The catalysed reaction is uridine(34) in tRNA + AH2 + O2 = 5-hydroxyuridine(34) in tRNA + A + H2O. In terms of biological role, catalyzes oxygen-dependent 5-hydroxyuridine (ho5U) modification at position 34 in tRNAs. This Kocuria rhizophila (strain ATCC 9341 / DSM 348 / NBRC 103217 / DC2201) protein is tRNA uridine(34) hydroxylase.